The primary structure comprises 131 residues: Large ribosomal subunit protein eL32 (131 aa).

A disordered region spans residues Leu-39 to Leu-77. The span at Arg-44–Pro-61 shows a compositional bias: basic residues.

Belongs to the eukaryotic ribosomal protein eL32 family.

In Methanopyrus kandleri (strain AV19 / DSM 6324 / JCM 9639 / NBRC 100938), this protein is Large ribosomal subunit protein eL32 (rpl32).